The following is a 127-amino-acid chain: Aspartate 1-decarboxylase (127 aa).

The Schiff-base intermediate with substrate; via pyruvic acid role is filled by S25. S25 carries the pyruvic acid (Ser) modification. T57 provides a ligand contact to substrate. The active-site Proton donor is Y58. 73–75 is a binding site for substrate; the sequence is GAA.

Belongs to the PanD family. Heterooctamer of four alpha and four beta subunits. Pyruvate is required as a cofactor. In terms of processing, is synthesized initially as an inactive proenzyme, which is activated by self-cleavage at a specific serine bond to produce a beta-subunit with a hydroxyl group at its C-terminus and an alpha-subunit with a pyruvoyl group at its N-terminus.

Its subcellular location is the cytoplasm. It carries out the reaction L-aspartate + H(+) = beta-alanine + CO2. It participates in cofactor biosynthesis; (R)-pantothenate biosynthesis; beta-alanine from L-aspartate: step 1/1. Catalyzes the pyruvoyl-dependent decarboxylation of aspartate to produce beta-alanine. This chain is Aspartate 1-decarboxylase, found in Bacillus velezensis (strain DSM 23117 / BGSC 10A6 / LMG 26770 / FZB42) (Bacillus amyloliquefaciens subsp. plantarum).